The chain runs to 154 residues: MAYAVIRIRGRVGVRRDIADTLKMLRLHKVNHCVIIPETETFKGMLQKVKDYVTWGEIDKDTLVKLILKRGRLPGNKKVNPEIIKELTGMDVEELAEKIINGEIKLKETPLKPVFRLHPPRKGFERGGIKKPFSVGGALGYRGEKINELLEKMM.

This sequence belongs to the universal ribosomal protein uL30 family. In terms of assembly, part of the 50S ribosomal subunit.

The sequence is that of Large ribosomal subunit protein uL30 from Methanocaldococcus jannaschii (strain ATCC 43067 / DSM 2661 / JAL-1 / JCM 10045 / NBRC 100440) (Methanococcus jannaschii).